Consider the following 858-residue polypeptide: Phospholipase D gamma 1 (858 aa).

Positions 27–163 (PFATSSGSLR…CSGNRIEGLF (137 aa)) constitute a C2 domain. Asp-225 contacts Ca(2+). A PLD phosphodiesterase 1 domain is found at 364-399 (TIYTHHQKTVIVDAEAAQNRRKIVAFVGGLDLCNGR). Active-site residues include His-369, Lys-371, and Asp-376. His-369 is a binding site for a 1,2-diacyl-sn-glycero-3-phosphate. His-405 and His-437 together coordinate Ca(2+). Residue Gln-565 coordinates a 1,2-diacyl-sn-glycero-3-phosphate. Ser-680 is subject to Phosphoserine. The 28-residue stretch at 704 to 731 (FMIYVHSKGMVVDDEFVLIGSANINQRS) folds into the PLD phosphodiesterase 2 domain. Active-site residues include His-709, Lys-711, and Asp-716. His-709 serves as a coordination point for a 1,2-diacyl-sn-glycero-3-phosphate. Ca(2+) is bound at residue Glu-772.

The protein belongs to the phospholipase D family. C2-PLD subfamily. It depends on Ca(2+) as a cofactor. In terms of tissue distribution, highly expressed in roots and flowers, moderately in stems, leaves and seedlings and low in siliques. Not detected in seeds.

The protein resides in the cytoplasm. It is found in the membrane. It carries out the reaction a 1,2-diacyl-sn-glycero-3-phosphocholine + H2O = a 1,2-diacyl-sn-glycero-3-phosphate + choline + H(+). Its activity is regulated as follows. Inhibited by neomycin. Up-regulated by PIP2 binding. Its function is as follows. Hydrolyzes glycerol-phospholipids at the terminal phosphodiesteric bond to generate phosphatidic acids (PA). Plays an important role in various cellular processes, including phytohormone action, vesicular trafficking, secretion, cytoskeletal arrangement, meiosis, tumor promotion, pathogenesis, membrane deterioration and senescence. Can use phosphatidylserine (PS) and phosphatidylethanolamine (PE) as substrates only in the presence of PIP2. Can use phosphatidylcholine (PC), phosphatidylglycerol (PG) or N-acylphosphatidylethanolamine (NAPE) as substrates in the presence of PE and PIP2. Involved in membrane lipid modulation under aluminum (Al) stress and negatively modulate plant tolerance to Al. This chain is Phospholipase D gamma 1, found in Arabidopsis thaliana (Mouse-ear cress).